The sequence spans 305 residues: Olfactory receptor 5M11 (305 aa).

Over 1–25 the chain is Extracellular; sequence MSNTNGSAITEFILLGLTDCPELQS. A glycan (N-linked (GlcNAc...) asparagine) is linked at N5. The helical transmembrane segment at 26–46 threads the bilayer; the sequence is LLFVLFLVVYLVTLLGNLGMI. The Cytoplasmic segment spans residues 47 to 54; it reads MLMRLDSR. A helical membrane pass occupies residues 55-75; that stretch reads LHTPMYFFLTNLAFVDLCYTS. Residues 76–98 are Extracellular-facing; sequence NATPQMSTNIVSEKTISFAGCFT. Residues C96 and C188 are joined by a disulfide bond. A helical transmembrane segment spans residues 99 to 119; it reads QCYIFIALLLTEFYMLAAMAY. Over 120–138 the chain is Cytoplasmic; sequence DRYVAIYDPLRYSVKTSRR. A helical transmembrane segment spans residues 139 to 159; sequence VCICLATFPYVYGFSDGLFQA. Residues 160-195 are Extracellular-facing; that stretch reads ILTFRLTFCRSSVINHFYCADPPLIKLSCSDTYVKE. A helical membrane pass occupies residues 196 to 216; sequence HAMFISAGFNLSSSLTIVLVS. Topologically, residues 217-236 are cytoplasmic; it reads YAFILAAILRIKSAEGRHKA. The chain crosses the membrane as a helical span at residues 237 to 257; that stretch reads FSTCGSHMMAVTLFYGTLFCM. The Extracellular portion of the chain corresponds to 258-270; it reads YIRPPTDKTVEES. A helical membrane pass occupies residues 271–291; that stretch reads KIIAVFYTFVSPVLNPLIYSL. At 292-305 the chain is on the cytoplasmic side; it reads RNKDVKQALKNVLR.

This sequence belongs to the G-protein coupled receptor 1 family.

The protein localises to the cell membrane. Functionally, odorant receptor. In Homo sapiens (Human), this protein is Olfactory receptor 5M11 (OR5M11).